The chain runs to 121 residues: Large ribosomal subunit protein bL21 (121 aa).

It belongs to the bacterial ribosomal protein bL21 family. As to quaternary structure, part of the 50S ribosomal subunit. Contacts protein L20.

This protein binds to 23S rRNA in the presence of protein L20. The sequence is that of Large ribosomal subunit protein bL21 from Gloeobacter violaceus (strain ATCC 29082 / PCC 7421).